The chain runs to 210 residues: Large ribosomal subunit protein uL3 (210 aa).

Positions histidine 126–threonine 152 are disordered.

Belongs to the universal ribosomal protein uL3 family. In terms of assembly, part of the 50S ribosomal subunit. Forms a cluster with proteins L14 and L19.

One of the primary rRNA binding proteins, it binds directly near the 3'-end of the 23S rRNA, where it nucleates assembly of the 50S subunit. This Chloroflexus aurantiacus (strain ATCC 29366 / DSM 635 / J-10-fl) protein is Large ribosomal subunit protein uL3.